Consider the following 730-residue polypeptide: MHVDSRGNAPVRRRRPAVACTECRRRKIRCDQATPCRHCEKAALRCIYNHLRPNTSQSKISPPTSASGFISGSQLSVNDSPQLPLSNDTKFHGFGSGSLKSDLSLEYVPSALPTSSSIFVEPNSLSSLSEPLAWEIAPPETGVGILAESDSPLNMQGQTGELRDQHTAPWMEILHCDPDEFWFDSEELRRMWRKTRDLELLLATSKMPSEWLYWSPGPTAPEASSLIPPRATCDVLLELQYWSSPDSMSDVFLCKLLLAMAIGTLFAPASPSAGQLTDMRPRALAWMHYGQQWLFRKIVLDAQLNLDILQTSPTSIGDRHFWLSEDCLVRMAMKLGLHRDPHIHNPAMLGTEVEVRRRLWVTLLELSLQASLDAKLPVPLPSDGGFDTELPSNLSDTDLGSIATLCNPNPRTFFTHSTMQILLAETQRIRIRILNLLYSPATSIPYQEALKLASELRRACNTNLRLLQSFTPQTPGAMMPTEFQTKILDLWTRRFLLALLTPYADEARSDYSLYYTRKARIDASSLLLSYPLSHSTATGPSPIGSYYLQLQISGQGIFRNVLKQATAAICQDLIQELVEDAFPVTDREPHAKLCQIIRDSISIYRTRMELSQPCMQEYVAFVCASAQIGALRSRCDNKHDFFPTAKKALGQCHHILESNHRSNSPEKYRAETMHVLDIDQGMNFWSDLLSTAGASPLSPPSSSSFFLEHGLSHTVPWEAPHSREVVDNER.

The segment at residues 20 to 46 (CTECRRRKIRCDQATPCRHCEKAALRC) is a DNA-binding region (zn(2)-C6 fungal-type).

The protein resides in the nucleus. In terms of biological role, transcription factor involved in regulation of gene cluster that mediates the biosynthesis of aspyridones. This chain is Aspyridones cluster regulator apdR, found in Emericella nidulans (strain FGSC A4 / ATCC 38163 / CBS 112.46 / NRRL 194 / M139) (Aspergillus nidulans).